We begin with the raw amino-acid sequence, 757 residues long: Lysyl oxidase homolog 4 (757 aa).

An N-terminal signal peptide occupies residues 1-25; that stretch reads MWFLPAALPLLPLLLLLGQAPPSRP. 4 SRCR domains span residues 33 to 134, 160 to 288, 312 to 412, and 422 to 530; these read LRLV…VVCN, VRLK…VSCV, VRLR…VRCN, and VRLA…VSCT. 17 cysteine pairs are disulfide-bonded: C59/C123, C72/C133, C103/C113, C192/C277, C205/C287, C252/C262, C337/C401, C350/C411, C381/C391, C451/C516, C464/C529, C498/C508, C559/C565, C611/C659, C643/C649, C671/C681, and C718/C732. Residue N199 is glycosylated (N-linked (GlcNAc...) asparagine). A lysyl-oxidase like region spans residues 534-737; the sequence is PDLVMNAQLV…WLHNCHTGDS (204 aa). The Cu cation site is built by H612, H614, and H616. N630 carries an N-linked (GlcNAc...) asparagine glycan. The lysine tyrosylquinone (Lys-Tyr) cross-link spans 639-675; it reads KASFCLEDTNCPTGMQRRYACANFGEQGVTVGCWDTY. At Y675 the chain carries 2',4',5'-topaquinone.

It belongs to the lysyl oxidase family. The cofactor is Cu cation. Lysine tyrosylquinone residue serves as cofactor. The lysine tyrosylquinone cross-link (LTQ) is generated by condensation of the epsilon-amino group of a lysine with a topaquinone produced by oxidation of tyrosine. Post-translationally, may be proteolytically cleaved by BMP1.

Its subcellular location is the secreted. It localises to the extracellular space. It carries out the reaction L-lysyl-[protein] + O2 + H2O = (S)-2-amino-6-oxohexanoyl-[protein] + H2O2 + NH4(+). Catalyzes the oxidative deamination of lysine and hydroxylysine residues in collagen and elastin, resulting in the formation of covalent cross-linkages, and the stabilization of collagen and elastin fibers. This Bos taurus (Bovine) protein is Lysyl oxidase homolog 4 (LOXL4).